The sequence spans 855 residues: Receptor-like protein kinase THESEUS 1 (855 aa).

The first 22 residues, 1-22 (MVFTKSLLVLLWFLSCYTTTTS), serve as a signal peptide directing secretion. The Extracellular segment spans residues 23-415 (SALFNPPDNY…GGSGSKSKKK (393 aa)). 14 N-linked (GlcNAc...) asparagine glycosylation sites follow: Asn41, Asn64, Asn75, Asn114, Asn118, Asn136, Asn143, Asn154, Asn168, Asn225, Asn242, Asn288, Asn353, and Asn376. Residues 416 to 436 (AVIIGSLVGAVTLILLIAVCC) traverse the membrane as a helical segment. The Cytoplasmic portion of the chain corresponds to 437-855 (YCCLVASRKQ…FSQLVHPRGR (419 aa)). Residues 510–783 (FDESSLLGVG…GDVLWNLEYA (274 aa)) enclose the Protein kinase domain. ATP is bound by residues 516–524 (LGVGGFGRV) and Lys538. The active-site Proton acceptor is the Asp634. The disordered stretch occupies residues 822–855 (IDRGGVNSGTGTDDDAEDATTSAVFSQLVHPRGR).

This sequence belongs to the protein kinase superfamily. Ser/Thr protein kinase family. In terms of processing, autophosphorylated. Expressed in most vegetative tissues, including leaves, stems and roots, primarily in expanding cells and vascular tissue.

It localises to the cell membrane. Functionally, receptor-like protein kinase required for cell elongation during vegetative growth, mostly in a brassinosteroid-(BR-) independent manner. Mediates the response of growing plant cells to the perturbation of cellulose synthesis and may act as a cell-wall-integrity sensor. Controls ectopic-lignin accumulation in cellulose-deficient mutant backgrounds. The chain is Receptor-like protein kinase THESEUS 1 (THE1) from Arabidopsis thaliana (Mouse-ear cress).